Consider the following 116-residue polypeptide: Large ribosomal subunit protein bL17 (116 aa).

It belongs to the bacterial ribosomal protein bL17 family. Part of the 50S ribosomal subunit. Contacts protein L32.

This chain is Large ribosomal subunit protein bL17, found in Synechocystis sp. (strain ATCC 27184 / PCC 6803 / Kazusa).